The sequence spans 472 residues: N-succinylglutamate 5-semialdehyde dehydrogenase 1 (472 aa).

Position 209–214 (209–214) interacts with NAD(+); sequence GGVQAG. Active-site residues include glutamate 232 and cysteine 266.

It belongs to the aldehyde dehydrogenase family. AstD subfamily.

The catalysed reaction is N-succinyl-L-glutamate 5-semialdehyde + NAD(+) + H2O = N-succinyl-L-glutamate + NADH + 2 H(+). It participates in amino-acid degradation; L-arginine degradation via AST pathway; L-glutamate and succinate from L-arginine: step 4/5. Functionally, catalyzes the NAD-dependent reduction of succinylglutamate semialdehyde into succinylglutamate. The polypeptide is N-succinylglutamate 5-semialdehyde dehydrogenase 1 (Caulobacter vibrioides (strain ATCC 19089 / CIP 103742 / CB 15) (Caulobacter crescentus)).